A 464-amino-acid polypeptide reads, in one-letter code: Argininosuccinate lyase (464 aa).

The protein belongs to the lyase 1 family. Argininosuccinate lyase subfamily.

It is found in the cytoplasm. It catalyses the reaction 2-(N(omega)-L-arginino)succinate = fumarate + L-arginine. Its pathway is amino-acid biosynthesis; L-arginine biosynthesis; L-arginine from L-ornithine and carbamoyl phosphate: step 3/3. This Desulfotalea psychrophila (strain LSv54 / DSM 12343) protein is Argininosuccinate lyase.